The sequence spans 208 residues: Uracil phosphoribosyltransferase (208 aa).

Residues R78, R103, and 130–138 (DPMLATGGS) each bind 5-phospho-alpha-D-ribose 1-diphosphate. Uracil-binding positions include I193 and 198–200 (GDA). D199 serves as a coordination point for 5-phospho-alpha-D-ribose 1-diphosphate.

The protein belongs to the UPRTase family. It depends on Mg(2+) as a cofactor.

It catalyses the reaction UMP + diphosphate = 5-phospho-alpha-D-ribose 1-diphosphate + uracil. Its pathway is pyrimidine metabolism; UMP biosynthesis via salvage pathway; UMP from uracil: step 1/1. With respect to regulation, allosterically activated by GTP. Catalyzes the conversion of uracil and 5-phospho-alpha-D-ribose 1-diphosphate (PRPP) to UMP and diphosphate. The chain is Uracil phosphoribosyltransferase from Escherichia coli O139:H28 (strain E24377A / ETEC).